We begin with the raw amino-acid sequence, 159 residues long: Large ribosomal subunit protein uL22 (159 aa).

It belongs to the universal ribosomal protein uL22 family. In terms of assembly, part of the 50S ribosomal subunit.

In terms of biological role, this protein binds specifically to 23S rRNA. It makes multiple contacts with different domains of the 23S rRNA in the assembled 50S subunit and ribosome. Its function is as follows. The globular domain of the protein is located near the polypeptide exit tunnel on the outside of the subunit, while an extended beta-hairpin is found that lines the wall of the exit tunnel in the center of the 70S ribosome. In Methanopyrus kandleri (strain AV19 / DSM 6324 / JCM 9639 / NBRC 100938), this protein is Large ribosomal subunit protein uL22.